Reading from the N-terminus, the 197-residue chain is ATP-dependent Clp protease proteolytic subunit (197 aa).

Ser102 functions as the Nucleophile in the catalytic mechanism. Residue His127 is part of the active site.

Belongs to the peptidase S14 family. Fourteen ClpP subunits assemble into 2 heptameric rings which stack back to back to give a disk-like structure with a central cavity, resembling the structure of eukaryotic proteasomes.

The protein localises to the cytoplasm. The enzyme catalyses Hydrolysis of proteins to small peptides in the presence of ATP and magnesium. alpha-casein is the usual test substrate. In the absence of ATP, only oligopeptides shorter than five residues are hydrolyzed (such as succinyl-Leu-Tyr-|-NHMec, and Leu-Tyr-Leu-|-Tyr-Trp, in which cleavage of the -Tyr-|-Leu- and -Tyr-|-Trp bonds also occurs).. Functionally, cleaves peptides in various proteins in a process that requires ATP hydrolysis. Has a chymotrypsin-like activity. Plays a major role in the degradation of misfolded proteins. The protein is ATP-dependent Clp protease proteolytic subunit of Buchnera aphidicola subsp. Schizaphis graminum (strain Sg).